Here is a 349-residue protein sequence, read N- to C-terminus: Replication-associated protein (349 aa).

Positions 8–116 (RLNAKNYFLT…DGDTVEWGEF (109 aa)) constitute a CRESS-DNA virus Rep endonuclease domain. The RCR-1 signature appears at 15–18 (FLTY). Residues Glu49, His57, and His59 each contribute to the a divalent metal cation site. The RCR-2 motif lies at 57 to 59 (HLH). The For DNA cleavage activity role is filled by Tyr103. The short motif at 103–106 (YIDK) is the RCR-3 element. Residue Asp107 coordinates a divalent metal cation. A binding to RBR1 region spans residues 143-153 (AEEALQIIKEE). Residues 156–176 (QHFFLQFHNIVSNANRIFQTP) are oligomerization. 221-228 (GPSRTGKT) lines the ATP pocket.

It belongs to the geminiviridae Rep protein family. Homooligomer. Interacts with the replication enhancer protein (REn). Interacts with host retinoblastoma-related protein 1 (RBR1), and may thereby induce the transcription of host replicative enzymes even if the cell is not dividing anymore. Interacts with host PCNA. Interacts with host SCE1 protein. Requires Mg(2+) as cofactor. Mn(2+) serves as cofactor.

It is found in the host nucleus. In terms of biological role, essential for the replication of viral ssDNA. The closed circular ssDNA genome is first converted to a superhelical dsDNA. Rep binds a specific region at the genome origin of replication. It introduces an endonucleolytic nick within the conserved sequence 5'-TAATATTAC-3' in the intergenic region of the genome present in all geminiviruses, thereby initiating the rolling circle replication (RCR). Following cleavage, binds covalently to the 5'-phosphate of DNA as a tyrosyl ester. The cleavage gives rise to a free 3'-OH that serves as a primer for the cellular DNA polymerase. The polymerase synthesizes the (+) strand DNA by rolling circle mechanism. After one round of replication, a Rep-catalyzed nucleotidyl transfer reaction releases a circular single-stranded virus genome, thereby terminating the replication. Displays origin-specific DNA cleavage, nucleotidyl transferase, ATPase and helicase activities. This is Replication-associated protein from Capsicum annuum (Capsicum pepper).